Here is a 604-residue protein sequence, read N- to C-terminus: Netrin-1 (604 aa).

Residues 1–24 form the signal peptide; that stretch reads MMRAVWEALAALAAVACLVGAVRG. The Laminin N-terminal domain maps to 47–284; the sequence is HPRRCIPDFV…AVSDLQVGGR (238 aa). Asparagine 95, asparagine 116, and asparagine 131 each carry an N-linked (GlcNAc...) asparagine glycan. 15 cysteine pairs are disulfide-bonded: cysteine 119–cysteine 152, cysteine 285–cysteine 294, cysteine 287–cysteine 304, cysteine 306–cysteine 315, cysteine 318–cysteine 338, cysteine 341–cysteine 350, cysteine 343–cysteine 368, cysteine 371–cysteine 380, cysteine 383–cysteine 401, cysteine 404–cysteine 416, cysteine 406–cysteine 423, cysteine 425–cysteine 434, cysteine 437–cysteine 451, cysteine 472–cysteine 544, and cysteine 491–cysteine 601. Laminin EGF-like domains follow at residues 285–340, 341–403, and 404–453; these read CKCN…ECVA, CNCN…ACKA, and CDCH…PCIK. Asparagine 417 carries an N-linked (GlcNAc...) asparagine glycan. The NTR domain occupies 472–601; it reads CDSYCKASKG…FQQREKKGKC (130 aa). Positions 530 to 532 match the Cell attachment site motif; sequence RGD.

As to quaternary structure, binds to its receptors; DCC, UNC5A, UNC5B, UNC5C and probably UNC5D. Binds to its receptor; DSCAM. Interacts with DCC. Interacts with APP. In terms of tissue distribution, widely expressed in normal adult tissues with highest levels in heart, small intestine, colon, liver and prostate. Reduced expression in brain tumors and neuroblastomas. Expressed in epididymis (at protein level).

It is found in the secreted. The protein localises to the cytoplasm. Netrins control guidance of CNS commissural axons and peripheral motor axons. Its association with either DCC or some UNC5 receptors will lead to axon attraction or repulsion, respectively. Binding to UNC5C might cause dissociation of UNC5C from polymerized TUBB3 in microtubules and thereby lead to increased microtubule dynamics and axon repulsion. Involved in dorsal root ganglion axon projection towards the spinal cord. It also serves as a survival factor via its association with its receptors which prevent the initiation of apoptosis. Involved in tumorigenesis by regulating apoptosis. The sequence is that of Netrin-1 (NTN1) from Homo sapiens (Human).